Consider the following 55-residue polypeptide: Large ribosomal subunit protein bL33 (55 aa).

This sequence belongs to the bacterial ribosomal protein bL33 family.

The chain is Large ribosomal subunit protein bL33 from Bifidobacterium longum (strain DJO10A).